The primary structure comprises 955 residues: Probable autotransporter YcgV (955 aa).

The disordered stretch occupies residues 616 to 659; it reads ASGTVPEPTPNPEPTPAPAQPPIVNPDPTPEPAPTPKPTTTADA. A compositionally biased stretch (pro residues) spans 622-652; sequence EPTPNPEPTPAPAQPPIVNPDPTPEPAPTPK. Positions 687–955 constitute an Autotransporter domain; it reads NQSKDGNIWL…QVNGGYRFSF (269 aa).

Upon overexpression shows increased adherence to polyvinyl chloride (PVC) plates, increased mature biofilm formation. The chain is Probable autotransporter YcgV (ycgV) from Escherichia coli (strain K12).